The sequence spans 500 residues: Probable cytosol aminopeptidase (500 aa).

Mn(2+) is bound by residues Lys-264 and Asp-269. Lys-276 is an active-site residue. Mn(2+) is bound by residues Asp-287, Asp-346, and Glu-348. Arg-350 is an active-site residue.

Belongs to the peptidase M17 family. It depends on Mn(2+) as a cofactor.

It localises to the cytoplasm. The catalysed reaction is Release of an N-terminal amino acid, Xaa-|-Yaa-, in which Xaa is preferably Leu, but may be other amino acids including Pro although not Arg or Lys, and Yaa may be Pro. Amino acid amides and methyl esters are also readily hydrolyzed, but rates on arylamides are exceedingly low.. The enzyme catalyses Release of an N-terminal amino acid, preferentially leucine, but not glutamic or aspartic acids.. In terms of biological role, presumably involved in the processing and regular turnover of intracellular proteins. Catalyzes the removal of unsubstituted N-terminal amino acids from various peptides. This Rhodopseudomonas palustris (strain ATCC BAA-98 / CGA009) protein is Probable cytosol aminopeptidase.